A 538-amino-acid chain; its full sequence is Protein PNS1 (538 aa).

The span at 1–54 (MGESDAYYNGGQQQQYNGGYQQQYQPQPPAASYQAPPQQPYQQQPYQQGPPQNG) shows a compositional bias: low complexity. Residues 1–67 (MGESDAYYNG…GNGYMPAQGY (67 aa)) are disordered. Topologically, residues 1–88 (MGESDAYYNG…FKIAKPKYND (88 aa)) are cytoplasmic. Residues 89–109 (LWAGILLILVFAGFVVVSGLA) form a helical membrane-spanning segment. The Extracellular segment spans residues 110-137 (LQGYSANKGNAGDGIYNNKNDFSPNTST). The N-linked (GlcNAc...) asparagine glycan is linked to asparagine 134. The chain crosses the membrane as a helical span at residues 138-158 (VILFMFVLAVAFVLSYAYVWM). Over 159–165 (ARLFPKQ) the chain is Cytoplasmic. A helical transmembrane segment spans residues 166 to 186 (FIWVTGILNVCWAIGTAIFYL). Topologically, residues 187 to 191 (WRKYW) are extracellular. Residues 192-212 (SAGIVFLIFGLFMAFCFWTWI) traverse the membrane as a helical segment. At 213–239 (SRIPFSALMLKTTIDVSKKYGHVYLVS) the chain is on the cytoplasmic side. The chain crosses the membrane as a helical span at residues 240–260 (LIGGIIATAFSAWYAITLVGI). Residues 261–280 (YVKYQPAQDNPSCADGGCGK) lie on the Extracellular side of the membrane. The helical transmembrane segment at 281-301 (GKVIGLIAFITFAMYWFSEWL) threads the bilayer. The Cytoplasmic segment spans residues 302 to 335 (KNTIHTTIAGVYGSWYFNPHNFPKDATRASAKRA). Residues 336–356 (LTYSFGSIALGSLLVAIIQFL) form a helical membrane-spanning segment. The Extracellular portion of the chain corresponds to 357–372 (RQICNAARNQEGADGS). A helical transmembrane segment spans residues 373-393 (FVGYAIFCCISCLLGLLEWAV). Over 394-434 (EFINRYAFCHIALYGKAYFAAAKDTWKMIKDRGIDALINDC) the chain is Cytoplasmic. A helical transmembrane segment spans residues 435 to 455 (LIGPVLSFGALFIAYACALLA). Topologically, residues 456–474 (YLYLYFTDPAYNSDGQYTA) are extracellular. The helical transmembrane segment at 475 to 495 (VVMAFSFLIGFQIANVFTTPI) threads the bilayer. Residues 496–538 (SSGIETIFVAAGWDPQVMWRDHPELYNEMVRVYPKVQQVIKDR) are Cytoplasmic-facing.

It belongs to the CTL (choline transporter-like) family.

The protein resides in the cell membrane. In terms of biological role, probably involved in transport through the plasma membrane. This chain is Protein PNS1 (PNS1), found in Gibberella zeae (strain ATCC MYA-4620 / CBS 123657 / FGSC 9075 / NRRL 31084 / PH-1) (Wheat head blight fungus).